We begin with the raw amino-acid sequence, 554 residues long: Glucose-6-phosphate isomerase (554 aa).

The active-site Proton donor is the E359. Residues H390 and K518 contribute to the active site.

This sequence belongs to the GPI family.

The protein localises to the cytoplasm. The enzyme catalyses alpha-D-glucose 6-phosphate = beta-D-fructose 6-phosphate. It participates in carbohydrate biosynthesis; gluconeogenesis. Its pathway is carbohydrate degradation; glycolysis; D-glyceraldehyde 3-phosphate and glycerone phosphate from D-glucose: step 2/4. Its function is as follows. Catalyzes the reversible isomerization of glucose-6-phosphate to fructose-6-phosphate. This Pseudomonas fluorescens (strain ATCC BAA-477 / NRRL B-23932 / Pf-5) protein is Glucose-6-phosphate isomerase.